Reading from the N-terminus, the 454-residue chain is MDRRIFGLENEYGVTCVFRGQRRLSPDEVARYLFRRVVSWGRSSNVFLKNGARLYLDVGSHPEYATPECDSVPDLVTHDKAGERILEGLLVEAERRLREEGIAGDIHLFKNNTDSAGNSYGCHENYLVGRHGEFSKLADVLVPFLVSRQILCGAGKVLQTPRGAVYCISQRAEHIWESVSSATTRSRPIINTRDEPHADAERFRRLHVIVGDSNMSETTMLLKLGATDLVLRMIEAGVMLRDMTLENPIRAIREVSHDMTCQRRIKLANGREVSALDIQWEYHSKAVEFVERRGGDGDEVAKRVLDLWGRTLLAIETDDLELVAREIDWVTKYVLIERFRHKHGLSLASPRVAELDLKYHDIHRDRGLYYRMERAGLVERVTRDLDVFEAKSRPPQTTRARLRGEFIKRAQEKRRDFTVDWVHLKLNDQAQRTVLCKDPFRSVDDRVDKLIASM.

Glutamate 9 provides a ligand contact to Mg(2+). Arginine 53 contacts ATP. Residue tyrosine 55 coordinates Mg(2+). Aspartate 57 functions as the Proton acceptor in the catalytic mechanism. Glutamate 63 is a binding site for Mg(2+). ATP is bound by residues threonine 66 and tryptophan 421.

The protein belongs to the Pup ligase/Pup deamidase family. Pup-conjugating enzyme subfamily.

It catalyses the reaction ATP + [prokaryotic ubiquitin-like protein]-L-glutamate + [protein]-L-lysine = ADP + phosphate + N(6)-([prokaryotic ubiquitin-like protein]-gamma-L-glutamyl)-[protein]-L-lysine.. It functions in the pathway protein degradation; proteasomal Pup-dependent pathway. The protein operates within protein modification; protein pupylation. In terms of biological role, catalyzes the covalent attachment of the prokaryotic ubiquitin-like protein modifier Pup to the proteasomal substrate proteins, thereby targeting them for proteasomal degradation. This tagging system is termed pupylation. The ligation reaction involves the side-chain carboxylate of the C-terminal glutamate of Pup and the side-chain amino group of a substrate lysine. This Frankia casuarinae (strain DSM 45818 / CECT 9043 / HFP020203 / CcI3) protein is Pup--protein ligase.